The following is a 145-amino-acid chain: Male-specific protein scotti (145 aa).

Positions 1 to 34 are disordered; it reads MANNRLMPEGQIIEEDMDGEDQNARELDIDDDDD. The span at 12-21 shows a compositional bias: acidic residues; sequence IIEEDMDGED.

Belongs to the male-specific scotti family.

In terms of biological role, post-meiotically transcribed gene that has a role in late spermiogenesis; required for actin cone progression during spermatid individualization. This is Male-specific protein scotti from Drosophila willistoni (Fruit fly).